Reading from the N-terminus, the 87-residue chain is Large ribosomal subunit protein bL27c (87 aa).

Residues 1 to 20 (MAHKKGSGSTKNGRDSRSQR) form a disordered region.

The protein belongs to the bacterial ribosomal protein bL27 family.

It is found in the plastid. It localises to the chloroplast. In Gracilaria tenuistipitata var. liui (Red alga), this protein is Large ribosomal subunit protein bL27c.